The sequence spans 401 residues: MAGATVTVEEVRKAQRATGPATVLAIGTATPANCVHQADYPDYYFRITKSEHMTELKEKFKRMCDKSQIRKRYMHLTEEYLAENPNMCAYMAPSLDARQDIVVVEVPKLGKAAAQKAIKEWGQPKSKITHLVFCTTSGVDMPGADYQLTKMLGLRPSVNRLMMYQQGCFAGGTVLRVAKDLAENNRGARVLVVCSEITAVTFRGPSESHLDSMVGQALFGDGAAAVIVGADPDERVERPLFQLVSASQTILPDSEGAIDGHLREVGLTFHLLKDVPGLISKNIERSLEEAFKPLGITDYNSIFWVAHPGGPAILDQVEAKVGLEKERMRATRHVLSEYGNMSSACVLFILDEMRKRSAEDGRATTGEGFEWGVLFGFGPGLTVETVVLHSVPITTGAAITA.

Cys168 is a catalytic residue.

Belongs to the thiolase-like superfamily. Chalcone/stilbene synthases family.

The enzyme catalyses (E)-4-coumaroyl-CoA + 3 malonyl-CoA + 3 H(+) = 2',4,4',6'-tetrahydroxychalcone + 3 CO2 + 4 CoA. It participates in secondary metabolite biosynthesis; flavonoid biosynthesis. Functionally, the primary product of this enzyme is 4,2',4',6'-tetrahydroxychalcone (also termed naringenin-chalcone or chalcone) which can under specific conditions spontaneously isomerize into naringenin. The polypeptide is Chalcone synthase 2 (CHS2) (Sorghum bicolor (Sorghum)).